The following is a 771-amino-acid chain: Kinase suppressor of Ras A (771 aa).

Residues 152–169 (SRTSSGSTDEPSGQSTPA) are compositionally biased toward polar residues. Residues 152 to 172 (SRTSSGSTDEPSGQSTPAIVT) form a disordered region. The Phorbol-ester/DAG-type zinc-finger motif lies at 215 to 269 (PHKWHRSTKFRFSGDAVCHFCQRPLGFGFLNAWEKCRSCKWKVHTQCKGRVGDSC). Disordered regions lie at residues 290 to 339 (GMWK…ISGN) and 414 to 433 (DSTG…EAVD). The segment covering 318 to 331 (SSSSTNSSAPSTPA) has biased composition (low complexity). The Protein kinase domain occupies 477–748 (DKQAPIIGRG…TDINLKLTAL (272 aa)). ATP is bound by residues 483 to 491 (IGRGRFGKV) and Lys-503. Asp-600 (proton acceptor) is an active-site residue.

The protein belongs to the protein kinase superfamily. TKL Ser/Thr protein kinase family. Interacts with mek-2. The cofactor is Mg(2+).

The enzyme catalyses L-seryl-[protein] + ATP = O-phospho-L-seryl-[protein] + ADP + H(+). It catalyses the reaction L-threonyl-[protein] + ATP = O-phospho-L-threonyl-[protein] + ADP + H(+). In terms of biological role, serine/threonine-protein kinase which positively regulates Ras-mediated signaling probably acting at the level of let-60/ras or/and lin-45/raf. Involved in sex myoblast migration. Plays a role in responses to M.nematophilum-mediated bacterial infection by promoting tail swelling and preventing constipation. Functions redundantly with ksr-2 in the Ras-mediated regulation of larval survival, the development of excretory canal and in mpk-1 phosphorylation in somatic cells. In addition, involved in determining vulval precursor cell fate during vulval induction independently of its kinase activity. Plays a role in egg-laying. The chain is Kinase suppressor of Ras A from Caenorhabditis elegans.